The sequence spans 692 residues: Elongation factor G (692 aa).

The region spanning 8 to 282 (ENTRNIGIMA…AVIDYLPSPL (275 aa)) is the tr-type G domain. GTP is bound by residues 17–24 (AHIDAGKT), 81–85 (DTPGH), and 135–138 (NKMD).

This sequence belongs to the TRAFAC class translation factor GTPase superfamily. Classic translation factor GTPase family. EF-G/EF-2 subfamily.

The protein resides in the cytoplasm. Functionally, catalyzes the GTP-dependent ribosomal translocation step during translation elongation. During this step, the ribosome changes from the pre-translocational (PRE) to the post-translocational (POST) state as the newly formed A-site-bound peptidyl-tRNA and P-site-bound deacylated tRNA move to the P and E sites, respectively. Catalyzes the coordinated movement of the two tRNA molecules, the mRNA and conformational changes in the ribosome. The sequence is that of Elongation factor G from Bacillus cereus (strain AH820).